The following is a 358-amino-acid chain: 3-dehydroquinate synthase (358 aa).

Residues 102-106 (GVVGD), 126-127 (TT), Lys-139, and Lys-148 contribute to the NAD(+) site. Residues Glu-181, His-244, and His-260 each contribute to the Zn(2+) site.

The protein belongs to the sugar phosphate cyclases superfamily. Dehydroquinate synthase family. Co(2+) serves as cofactor. The cofactor is Zn(2+). It depends on NAD(+) as a cofactor.

It is found in the cytoplasm. It carries out the reaction 7-phospho-2-dehydro-3-deoxy-D-arabino-heptonate = 3-dehydroquinate + phosphate. It participates in metabolic intermediate biosynthesis; chorismate biosynthesis; chorismate from D-erythrose 4-phosphate and phosphoenolpyruvate: step 2/7. In terms of biological role, catalyzes the conversion of 3-deoxy-D-arabino-heptulosonate 7-phosphate (DAHP) to dehydroquinate (DHQ). The polypeptide is 3-dehydroquinate synthase (Symbiobacterium thermophilum (strain DSM 24528 / JCM 14929 / IAM 14863 / T)).